A 1003-amino-acid chain; its full sequence is Putative helicase MOV-10 (1003 aa).

The residue at position 148 (Lys-148) is an N6-acetyllysine. Thr-160 and Thr-254 each carry phosphothreonine. The residue at position 432 (Ser-432) is a Phosphoserine. An ATP-binding site is contributed by 524 to 531 (GPPGTGKT). The DEAG box signature appears at 645–648 (DEAG). Residues 921-965 (NPLLLGHDPDWKVFLEFCKENGGYTGCPFPAKLDLQQGQNLLQGL) form an interaction with AGO2 and APOBEC3G region. The segment at 968–1003 (LSPSTSGLKSHDYLPQEREGEEGLSLQVEPEWRNEL) is disordered. Residues Ser-969 and Ser-977 each carry the phosphoserine modification. Residues 976 to 985 (KSHDYLPQER) show a composition bias toward basic and acidic residues.

This sequence belongs to the DNA2/NAM7 helicase family. SDE3 subfamily. In terms of assembly, interacts with DICER1, AGO2, TARBP2, EIF6 and RPL7A (60S ribosome subunit); they form a large RNA-induced silencing complex (RISC). Interacts with APOBEC3G in an RNA-dependent manner. Interacts with TRIM71 (via NHL repeats) in an RNA-dependent manner. Interacts with both protein products of LIRE1, ORF1p and ORF2p. Interacts with TUT4 and, to a lesser extent, TUT7; the interactions are RNA-dependent. Interacts with AGO2, TNRC6B and UPF1; the interactions are direct and RNA-dependent. Interacts with FMR1; this interaction is direct, occurs in an RNA-dependent manner on polysomes and induces association of MOV10 with RNAs. Interacts with SHFL; the interaction increases in presence of RNA. Interacts with DHX34; the interaction is-RNA independent. Interacts with RBM46. In terms of processing, ubiquitinated by the DCX(DCAF12) complex that specifically recognizes the glutamate-leucine (Glu-Leu) degron at the C-terminus, leading to its degradation.

It is found in the cytoplasm. The protein resides in the P-body. Its subcellular location is the cytoplasmic ribonucleoprotein granule. The protein localises to the stress granule. It localises to the nucleus. The enzyme catalyses ATP + H2O = ADP + phosphate + H(+). In terms of biological role, 5' to 3' RNA helicase that is involved in a number of cellular roles ranging from mRNA metabolism and translation, modulation of viral infectivity, inhibition of retrotransposition, or regulation of synaptic transmission. Plays an important role in innate antiviral immunity by promoting type I interferon production. Mechanistically, specifically uses IKKepsilon/IKBKE as the mediator kinase for IRF3 activation. Contributes to UPF1 mRNA target degradation by translocation along 3' UTRs. Required for microRNA (miRNA)-mediated gene silencing by the RNA-induced silencing complex (RISC). Required for both miRNA-mediated translational repression and miRNA-mediated cleavage of complementary mRNAs by RISC. In cooperation with FMR1, regulates miRNA-mediated translational repression by AGO2. Restricts retrotransposition of long interspersed element-1 (LINE-1) in cooperation with TUT4 and TUT7 counteracting the RNA chaperonne activity of L1RE1. Facilitates LINE-1 uridylation by TUT4 and TUT7. Required for embryonic viability and for normal central nervous system development and function. Plays two critical roles in early brain development: suppresses retroelements in the nucleus by directly inhibiting cDNA synthesis, while regulates cytoskeletal mRNAs to influence neurite outgrowth in the cytosol. May function as a messenger ribonucleoprotein (mRNP) clearance factor. In Bos taurus (Bovine), this protein is Putative helicase MOV-10 (MOV10).